The chain runs to 477 residues: Glycogen synthase (477 aa).

Lys15 contributes to the ADP-alpha-D-glucose binding site.

This sequence belongs to the glycosyltransferase 1 family. Bacterial/plant glycogen synthase subfamily.

It carries out the reaction [(1-&gt;4)-alpha-D-glucosyl](n) + ADP-alpha-D-glucose = [(1-&gt;4)-alpha-D-glucosyl](n+1) + ADP + H(+). It participates in glycan biosynthesis; glycogen biosynthesis. Synthesizes alpha-1,4-glucan chains using ADP-glucose. The sequence is that of Glycogen synthase from Klebsiella pneumoniae (strain 342).